The primary structure comprises 50 residues: Nosiheptide precursor (50 aa).

The thiazole-4-carboxylic acid (Ser-Cys) cross-link spans 38-39 (SC). Residues 38–46 (SCTTCECCC) constitute a cross-link (3-hydroxypyridine-2,5-dicarboxylic acid (Ser-Cys) (with S-47)). Residues 38–47 (SCTTCECCCS) constitute a cross-link (3-hydroxypyridine-2,5-dicarboxylic acid (Ser-Ser) (with C-46)). The segment at residues 41-42 (TC) is a cross-link (thiazole-4-carboxylic acid (Thr-Cys)). Residue E43 is modified to 4-hydroxyglutamate. Residues 43–44 (EC) constitute a cross-link (thiazole-4-carboxylic acid (Glu-Cys)). The segment at residues 43–45 (ECC) is a cross-link (2-(cystein-S-ylcarbonyl)-3-methyl-4-(glutam-5-yloxy)methylindole (Glu-Cys)). A cross-link (thiazole-4-carboxylic acid (Cys-Cys)) is located at residues 45–46 (CC). The thiazole-4-carboxylic acid (Ser-Cys) cross-link spans 47 to 48 (SC). The residue at position 49 (S49) is a 2,3-didehydroalanine (Ser). At S49 the chain carries Serine amide; atypical.

Belongs to the thiocillin family. In terms of processing, the amidation of Ser-49 is produced by the oxidative cleavage of Ser-50 rather than of a glycine, as in eukaryotes.

Its function is as follows. Inhibits bacterial protein biosynthesis by binding to ribosomes. Specifically, binds to the complex of 23S rRNA and ribosomal protein L11 (RPLK) in the 50S ribosomal subunit. While allowing a weak binding of elongation factor G (EF-G) to the ribosome and subsequent GTP-hydrolysis, probably impairs conformational changes in both the ribosome and EF-G which are necessary for translocation. In vitro, inhibits Gram-positive bacteria S.aureus strain 209P (MIC=0.0009 ug/ml), S.aureus strain 133 (MIC=0.0019 ug/ml), S.aureus strain B3 (MIC=0.003 ug/ml), S.aureus strain Hb (MIC=0.003 ug/ml), M.citreus strain ATCC 8411 (MIC=0.0038 ug/ml), M.lysodeikticus strain ATCC 4698 (MIC=0.003 ug/ml), S.lutea strain ATCC 9341 (MIC=0.0011 ug/ml), S.faecalis strain ATCC 9790 (MIC=0.0007 ug/ml), S.viridans (MIC=0.0065 ug/ml), S.pyogenes hemolyticus strain Dig7 (MIC=0.00028 ug/ml), D.pneumoniae strain Til (MIC=0.00015 ug/ml), N.catrrhalis (MIC=0.0017 ug/ml), L.casei strain ATCC 6633 (MIC=0.003 ug/ml), B.cereus strain ATCC 6630 (MIC=0.0071 ug/ml) and various isolates of L.monocytogenes. In vitro, inhibits Gram-negative bacterium P.multocida strain A125 (MIC=0.0024 ug/ml) but not M.smegmatis strain ATCC 6630, S.typhimurium, A.aerogenes strain ATCC 8308, P.vulgaris, K.pneumoniae strain ATCC 10031, S.marcescens strain A476, P.aeruginosa strain Bass or B.bronchiseptica strain CN387. Does not inhibit Gram-negative bacterium E.coli strain ATCC 9637 but does inhibit purified ribosomes from E.coli. In vivo, has no systemic effect in mice infected with staphylococci or streptococci when applied orally or subcutaneously. Has a local effect in mice infected subcutaneously or intraperitoneally with staphylococci when applied immediately afterwards. Is not toxic to mice. The protein is Nosiheptide precursor of Streptomyces actuosus.